We begin with the raw amino-acid sequence, 167 residues long: Interferon gamma (167 aa).

The N-terminal stretch at 1–23 (MSYTSYILAFQLCLILGSYGCYC) is a signal peptide. Pyrrolidone carboxylic acid is present on Gln-24. Asn-41, Asn-108, and Asn-117 each carry an N-linked (GlcNAc...) asparagine glycan.

This sequence belongs to the type II (or gamma) interferon family. Homodimer. Interacts with IFNGR1 (via extracellular domain); this interaction promotes IFNGR1 dimerization. As to expression, released primarily from activated T lymphocytes.

Its subcellular location is the secreted. Type II interferon produced by immune cells such as T-cells and NK cells that plays crucial roles in antimicrobial, antiviral, and antitumor responses by activating effector immune cells and enhancing antigen presentation. Primarily signals through the JAK-STAT pathway after interaction with its receptor IFNGR1 to affect gene regulation. Upon IFNG binding, IFNGR1 intracellular domain opens out to allow association of downstream signaling components JAK2, JAK1 and STAT1, leading to STAT1 activation, nuclear translocation and transcription of IFNG-regulated genes. Many of the induced genes are transcription factors such as IRF1 that are able to further drive regulation of a next wave of transcription. Plays a role in class I antigen presentation pathway by inducing a replacement of catalytic proteasome subunits with immunoproteasome subunits. In turn, increases the quantity, quality, and repertoire of peptides for class I MHC loading. Increases the efficiency of peptide generation also by inducing the expression of activator PA28 that associates with the proteasome and alters its proteolytic cleavage preference. Up-regulates as well MHC II complexes on the cell surface by promoting expression of several key molecules such as cathepsins B/CTSB, H/CTSH, and L/CTSL. Participates in the regulation of hematopoietic stem cells during development and under homeostatic conditions by affecting their development, quiescence, and differentiation. The polypeptide is Interferon gamma (IFNG) (Oryctolagus cuniculus (Rabbit)).